Reading from the N-terminus, the 199-residue chain is Ribosome biogenesis protein RLP24 (199 aa).

Residues Lys-147 to Lys-182 are disordered. Residues Ser-156–Gln-179 show a composition bias toward acidic residues. The residue at position 172 (Ser-172) is a Phosphoserine.

The protein belongs to the eukaryotic ribosomal protein eL24 family. In terms of assembly, associated with nucleolar and cytoplasmic pre-60S particles. At the end of biogenesis it dissociates from cytoplasmic pre-60S particles and is likely to be exchanged for its ribosomal homolog, RPL24. Interacts (via C-terminus) with AFG2 (hexameric form); the interaction is direct, recruits AFG2 to pre-60S ribosomal particles and promotes AFG2 ATPase activity and RLP24 release from pre-60S ribosomal particles. Interacts with NOG1; the interaction is direct.

It is found in the cytoplasm. It localises to the nucleus. In terms of biological role, involved in the biogenesis of the 60S ribosomal subunit. Ensures the docking of NOG1 to pre-60S ribosomal particles. Activates and recruits ATPase AFG2 to cytoplasmic pre-60S ribosomal particles. This is Ribosome biogenesis protein RLP24 (RLP24) from Saccharomyces cerevisiae (strain ATCC 204508 / S288c) (Baker's yeast).